The sequence spans 208 residues: MELKVLNTGGTETGEVVTLNDEIFGADISEHAMYLDVKSILANRRQGTHKAKTRAEVRGGGRKPFRQKGTGNARQGSTRSPLMIGGGTIFGPQPRSYDQKVNKKVKQLARRSALSAKAQAGQIVVVEDFRLGEIKTKPVADILKNLGLAEKKTLMLTPEYDMIIARSGRNIEALNIMSAEKASTYDILDSQAIVFQKAALKKIEDTLG.

Positions 46-84 are disordered; it reads QGTHKAKTRAEVRGGGRKPFRQKGTGNARQGSTRSPLMI. Residues 69–80 are compositionally biased toward polar residues; the sequence is GTGNARQGSTRS.

It belongs to the universal ribosomal protein uL4 family. As to quaternary structure, part of the 50S ribosomal subunit.

Functionally, one of the primary rRNA binding proteins, this protein initially binds near the 5'-end of the 23S rRNA. It is important during the early stages of 50S assembly. It makes multiple contacts with different domains of the 23S rRNA in the assembled 50S subunit and ribosome. Its function is as follows. Forms part of the polypeptide exit tunnel. The sequence is that of Large ribosomal subunit protein uL4 from Chlorobium limicola (strain DSM 245 / NBRC 103803 / 6330).